The following is a 763-amino-acid chain: Probable ubiquitin carboxyl-terminal hydrolase MINDY-4 (763 aa).

The residue at position 143 (Ser-143) is a Phosphoserine. The interval 154–368 (SSKRSSHKSR…SQPASLRKNQ (215 aa)) is disordered. Residues 180 to 202 (EKTDKLPMSEPSLDTKRMGEKVR) are compositionally biased toward basic and acidic residues. A phosphoserine mark is found at Ser-220 and Ser-224. Polar residues predominate over residues 252 to 261 (ELSTHTSTCP). The span at 267-278 (PASSTASTSRSP) shows a compositional bias: low complexity. Ser-296 bears the Phosphoserine mark. The segment covering 346–355 (TQERPERAFE) has biased composition (basic and acidic residues). A compositionally biased stretch (polar residues) spans 357-368 (QGSQPASLRKNQ). The active-site Nucleophile is the Cys-463. His-683 acts as the Proton acceptor in catalysis.

The protein belongs to the MINDY deubiquitinase family. FAM188 subfamily.

The enzyme catalyses Thiol-dependent hydrolysis of ester, thioester, amide, peptide and isopeptide bonds formed by the C-terminal Gly of ubiquitin (a 76-residue protein attached to proteins as an intracellular targeting signal).. In terms of biological role, probable hydrolase that can remove 'Lys-48'-linked conjugated ubiquitin from proteins. The polypeptide is Probable ubiquitin carboxyl-terminal hydrolase MINDY-4 (MINDY4) (Bos taurus (Bovine)).